Reading from the N-terminus, the 145-residue chain is HTH-type transcriptional regulator MhqR (145 aa).

The HTH marR-type domain occupies 5 to 137 (SLKLFIVLSR…CTEMLKRVGL (133 aa)). The H-T-H motif DNA-binding region spans 51-74 (LQQIGDKILLASGSITYVVDKLEQ).

Negatively regulates mhqA, mhqED, mhqNOP, and azoR2 which may contribute to the degradation of aromatic compounds. In Bacillus subtilis (strain 168), this protein is HTH-type transcriptional regulator MhqR (mhqR).